The following is a 236-amino-acid chain: 5'-methylthioadenosine/S-adenosylhomocysteine nucleosidase (236 aa).

Glu-12 functions as the Proton acceptor in the catalytic mechanism. Substrate is bound by residues Gly-78, Ile-153, and 174–175 (ME). Asp-198 serves as the catalytic Proton donor.

The protein belongs to the PNP/UDP phosphorylase family. MtnN subfamily.

The enzyme catalyses S-adenosyl-L-homocysteine + H2O = S-(5-deoxy-D-ribos-5-yl)-L-homocysteine + adenine. It catalyses the reaction S-methyl-5'-thioadenosine + H2O = 5-(methylsulfanyl)-D-ribose + adenine. The catalysed reaction is 5'-deoxyadenosine + H2O = 5-deoxy-D-ribose + adenine. The protein operates within amino-acid biosynthesis; L-methionine biosynthesis via salvage pathway; S-methyl-5-thio-alpha-D-ribose 1-phosphate from S-methyl-5'-thioadenosine (hydrolase route): step 1/2. In terms of biological role, catalyzes the irreversible cleavage of the glycosidic bond in both 5'-methylthioadenosine (MTA) and S-adenosylhomocysteine (SAH/AdoHcy) to adenine and the corresponding thioribose, 5'-methylthioribose and S-ribosylhomocysteine, respectively. Also cleaves 5'-deoxyadenosine, a toxic by-product of radical S-adenosylmethionine (SAM) enzymes, into 5-deoxyribose and adenine. The sequence is that of 5'-methylthioadenosine/S-adenosylhomocysteine nucleosidase from Shewanella baltica (strain OS223).